A 331-amino-acid polypeptide reads, in one-letter code: Tetraacyldisaccharide 4'-kinase (331 aa).

51-58 serves as a coordination point for ATP; it reads TAGGAGKT.

This sequence belongs to the LpxK family.

The enzyme catalyses a lipid A disaccharide + ATP = a lipid IVA + ADP + H(+). It functions in the pathway glycolipid biosynthesis; lipid IV(A) biosynthesis; lipid IV(A) from (3R)-3-hydroxytetradecanoyl-[acyl-carrier-protein] and UDP-N-acetyl-alpha-D-glucosamine: step 6/6. In terms of biological role, transfers the gamma-phosphate of ATP to the 4'-position of a tetraacyldisaccharide 1-phosphate intermediate (termed DS-1-P) to form tetraacyldisaccharide 1,4'-bis-phosphate (lipid IVA). This Rhodospirillum rubrum (strain ATCC 11170 / ATH 1.1.1 / DSM 467 / LMG 4362 / NCIMB 8255 / S1) protein is Tetraacyldisaccharide 4'-kinase.